The primary structure comprises 153 residues: 6,7-dimethyl-8-ribityllumazine synthase (153 aa).

5-amino-6-(D-ribitylamino)uracil is bound by residues Phe-22, Ala-56 to Glu-58, and Ala-80 to Ile-82. (2S)-2-hydroxy-3-oxobutyl phosphate is bound at residue Ala-85–Thr-86. His-88 acts as the Proton donor in catalysis. Phe-113 is a binding site for 5-amino-6-(D-ribitylamino)uracil. Arg-127 serves as a coordination point for (2S)-2-hydroxy-3-oxobutyl phosphate.

The protein belongs to the DMRL synthase family.

The enzyme catalyses (2S)-2-hydroxy-3-oxobutyl phosphate + 5-amino-6-(D-ribitylamino)uracil = 6,7-dimethyl-8-(1-D-ribityl)lumazine + phosphate + 2 H2O + H(+). Its pathway is cofactor biosynthesis; riboflavin biosynthesis; riboflavin from 2-hydroxy-3-oxobutyl phosphate and 5-amino-6-(D-ribitylamino)uracil: step 1/2. Its function is as follows. Catalyzes the formation of 6,7-dimethyl-8-ribityllumazine by condensation of 5-amino-6-(D-ribitylamino)uracil with 3,4-dihydroxy-2-butanone 4-phosphate. This is the penultimate step in the biosynthesis of riboflavin. The chain is 6,7-dimethyl-8-ribityllumazine synthase from Clostridium tetani (strain Massachusetts / E88).